The sequence spans 707 residues: Probable potassium transporter 17 (707 aa).

Residues 1 to 25 (MDLEAGSIRPRSDGEGGGPAAGRET) form a disordered region. Over 1–34 (MDLEAGSIRPRSDGEGGGPAAGRETDDSNVWKDL) the chain is Cytoplasmic. A helical membrane pass occupies residues 35–55 (FLAYKTLGVVFGGLVTSPLYV). Over 56–71 (YPSMNLSSPTEADYLG) the chain is Extracellular. Asparagine 60 carries N-linked (GlcNAc...) asparagine glycosylation. Residues 72 to 92 (IYSIMFWTLTLIGVVKYVCIA) traverse the membrane as a helical segment. Topologically, residues 93–157 (LNADDHGEGG…FFEQSITARR (65 aa)) are cytoplasmic. A helical membrane pass occupies residues 158–178 (VLLFVAVLGMCMLIGDGILTP). Topologically, residues 179 to 194 (AISVLSAIDGIRGPFP) are extracellular. A helical transmembrane segment spans residues 195-215 (TVSKPVVEALSAAILIGLFLL). The Cytoplasmic portion of the chain corresponds to 216–222 (QKYGTSK). Residues 223–243 (VSFLFSPIMAAWTFTTPIIGL) traverse the membrane as a helical segment. Residues 244 to 276 (YSIVHYYPGIFKAISPYYIVHFFLRNKRQGWQL) lie on the Extracellular side of the membrane. A helical transmembrane segment spans residues 277–297 (LGGTVLCITGAEAMFADLGHF). The Cytoplasmic segment spans residues 298-305 (SKKAIQIA). A helical membrane pass occupies residues 306 to 326 (FLSSIYPSLVLTYAGQTAYLI). The Extracellular portion of the chain corresponds to 327–343 (NNVNDFGDGFYKFVPRP). Residues 344–364 (VYWPMFVVATLAAIVASQSLI) traverse the membrane as a helical segment. Topologically, residues 365-402 (SATFSVIKQSVVLDYFPRVKVVHTSQHKEGEVYSPEIN) are cytoplasmic. A helical transmembrane segment spans residues 403–423 (YILMVLCVGVILGFGGGKAIG). Over 424 to 427 (NAFG) the chain is Extracellular. Residues 428–448 (VVVIMVMLITTVLLTLVMIII) traverse the membrane as a helical segment. Topologically, residues 449-454 (WRTPLV) are cytoplasmic. Residues 455–475 (LAGLYFVPFFIMEGAYVSAVF) form a helical membrane-spanning segment. Over 476-480 (TKIPE) the chain is Extracellular. The chain crosses the membrane as a helical span at residues 481–501 (GGWLPFAVSITLAMIMFGWYY). The Cytoplasmic portion of the chain corresponds to 502 to 707 (GRQRKFEYEM…RVEIGMLYKV (206 aa)).

It belongs to the HAK/KUP transporter (TC 2.A.72.3) family.

The protein localises to the membrane. Its function is as follows. High-affinity potassium transporter. The protein is Probable potassium transporter 17 (HAK17) of Oryza sativa subsp. japonica (Rice).